A 142-amino-acid polypeptide reads, in one-letter code: Large ribosomal subunit protein bL19 (142 aa).

It belongs to the bacterial ribosomal protein bL19 family.

Its function is as follows. This protein is located at the 30S-50S ribosomal subunit interface and may play a role in the structure and function of the aminoacyl-tRNA binding site. The polypeptide is Large ribosomal subunit protein bL19 (Rickettsia bellii (strain OSU 85-389)).